The chain runs to 351 residues: Putative [LysW]-L-2-aminoadipate/[LysW]-L-glutamate phosphate reductase (351 aa).

NADP(+) is bound by residues 10 to 13 (SGFT) and 34 to 36 (SRK). The active site involves Cys-151. Asn-318 contacts NADP(+).

Belongs to the NAGSA dehydrogenase family. Type 1 subfamily. LysY sub-subfamily.

It localises to the cytoplasm. The catalysed reaction is [amino-group carrier protein]-C-terminal-N-(1-carboxy-5-oxopentan-1-yl)-L-glutamine + phosphate + NADP(+) = [amino-group carrier protein]-C-terminal-N-(1-carboxy-5-phosphooxy-5-oxopentan-1-yl)-L-glutamine + NADPH + H(+). The enzyme catalyses [amino-group carrier protein]-C-terminal-gamma-(L-glutamyl-5-semialdehyde)-L-glutamate + phosphate + NADP(+) = [amino-group carrier protein]-C-terminal-gamma-(5-phospho-L-glutamyl)-L-glutamate + NADPH + H(+). The protein operates within amino-acid biosynthesis; L-lysine biosynthesis via AAA pathway; L-lysine from L-alpha-aminoadipate (Thermus route): step 3/5. Its pathway is amino-acid biosynthesis; L-arginine biosynthesis. Its function is as follows. Involved in both the arginine and lysine biosynthetic pathways. This chain is Putative [LysW]-L-2-aminoadipate/[LysW]-L-glutamate phosphate reductase, found in Pyrobaculum calidifontis (strain DSM 21063 / JCM 11548 / VA1).